The primary structure comprises 464 residues: MEPSPLELPVDAVRRIATELNCDPTDERVALRLDEEDKLKRFKDCFYIPKMRDLPSIDLSLVNEDDNAIYFLGNSLGLQPKMVKTYLEEELDKWAKIGAYGHEVGKRPWIIGDESIVSLMKDIVGAHEKEIALMNALTVNLHLLLLSFFKPTPKRHKILLEAKAFPSDHYAIESQIQLHGLDVEKSMRMIKPREGEETLRMEDILEVIEKEGDSIAVVLFSGLHFYTGQLFNIPAITQAGHAKGCFVGFDLAHAVGNVELHLHDWDVDFACWCSYKYLNSGAGGLAGAFIHEKHAHTIKPALVGWFGHELSTRFNMDNKLQLIPGVNGFRISNPPILLVCSLHASLEIFQQATMTALRRKSILLTGYLEYLLKHYHGGNDTENKRPVVNIITPSRAEERGCQLTLTFSISKKGVFKELEKRGVVCDKREPEGIRVAPVPLYNSFHDVYKFIRLLTAILDSTERN.

M1 bears the N-acetylmethionine mark. Pyridoxal 5'-phosphate contacts are provided by residues L137, T138, 165–168 (FPSD), S221, D250, H253, and Y275. K276 is modified (N6-(pyridoxal phosphate)lysine). Positions 305 and 333 each coordinate pyridoxal 5'-phosphate.

It belongs to the kynureninase family. In terms of assembly, homodimer. The cofactor is pyridoxal 5'-phosphate. In terms of tissue distribution, high levels in liver and kidney. Also detected in heart, retina, ovary. Lung, testis and brain.

It is found in the cytoplasm. It localises to the cytosol. It carries out the reaction L-kynurenine + H2O = anthranilate + L-alanine + H(+). It catalyses the reaction 3-hydroxy-L-kynurenine + H2O = 3-hydroxyanthranilate + L-alanine + H(+). It participates in amino-acid degradation; L-kynurenine degradation; L-alanine and anthranilate from L-kynurenine: step 1/1. Its pathway is cofactor biosynthesis; NAD(+) biosynthesis; quinolinate from L-kynurenine: step 2/3. Its activity is regulated as follows. Inhibited by o-methylbenzoylalanine (OMBA). Functionally, catalyzes the cleavage of L-kynurenine (L-Kyn) and L-3-hydroxykynurenine (L-3OHKyn) into anthranilic acid (AA) and 3-hydroxyanthranilic acid (3-OHAA), respectively. Has a preference for the L-3-hydroxy form. Also has cysteine-conjugate-beta-lyase activity. The chain is Kynureninase (Kynu) from Rattus norvegicus (Rat).